An 808-amino-acid chain; its full sequence is Probable mannosyl-oligosaccharide glucosidase (808 aa).

Residues 1–11 (MVSDMLGGNKR) are Cytoplasmic-facing. The chain crosses the membrane as a helical; Signal-anchor for type II membrane protein span at residues 12–31 (WILFGLLSFLLNCVLVSCSV). At 32 to 808 (EDIEKAANDS…LVVNIMSENY (777 aa)) the chain is on the lumenal side. Asparagine 39 is a glycosylation site (N-linked (GlcNAc...) asparagine). The active-site Proton donor is the aspartate 580. The active-site Proton acceptor is the glutamate 778.

It belongs to the glycosyl hydrolase 63 family.

It localises to the endoplasmic reticulum membrane. It carries out the reaction N(4)-(alpha-D-Glc-(1-&gt;2)-alpha-D-Glc-(1-&gt;3)-alpha-D-Glc-(1-&gt;3)-alpha-D-Man-(1-&gt;2)-alpha-D-Man-(1-&gt;2)-alpha-D-Man-(1-&gt;3)-[alpha-D-Man-(1-&gt;2)-alpha-D-Man-(1-&gt;3)-[alpha-D-Man-(1-&gt;2)-alpha-D-Man-(1-&gt;6)]-alpha-D-Man-(1-&gt;6)]-beta-D-Man-(1-&gt;4)-beta-D-GlcNAc-(1-&gt;4)-beta-D-GlcNAc)-L-asparaginyl-[protein] + H2O = N(4)-(alpha-D-Glc-(1-&gt;3)-alpha-D-Glc-(1-&gt;3)-alpha-D-Man-(1-&gt;2)-alpha-D-Man-(1-&gt;2)-alpha-D-Man-(1-&gt;3)-[alpha-D-Man-(1-&gt;2)-alpha-D-Man-(1-&gt;3)-[alpha-D-Man-(1-&gt;2)-alpha-D-Man-(1-&gt;6)]-alpha-D-Man-(1-&gt;6)]-beta-D-Man-(1-&gt;4)-beta-D-GlcNAc-(1-&gt;4)-beta-D-GlcNAc)-L-asparaginyl-[protein] + beta-D-glucose. Functionally, cleaves the distal alpha 1,2-linked glucose residue from the Glc(3)Man(9)GlcNAc(2) oligosaccharide precursor highly specifically. The sequence is that of Probable mannosyl-oligosaccharide glucosidase from Schizosaccharomyces pombe (strain 972 / ATCC 24843) (Fission yeast).